We begin with the raw amino-acid sequence, 1484 residues long: Glutamate receptor ionotropic, NMDA 2B (1484 aa).

Positions 1 to 26 (MKPRAECCSPKFWLVLAVLAVSGSRA) are cleaved as a signal peptide. Residues 27–555 (RSQKSPPSIG…SPSAFLEPFS (529 aa)) lie on the Extracellular side of the membrane. Residue Asn-74 is glycosylated (N-linked (GlcNAc...) asparagine). Cysteines 86 and 321 form a disulfide. Zn(2+) contacts are provided by His-127 and Glu-284. N-linked (GlcNAc...) asparagine glycans are attached at residues Asn-341, Asn-348, Asn-444, and Asn-491. Intrachain disulfides connect Cys-429–Cys-456 and Cys-436–Cys-457. Residues Thr-514 and Arg-519 each contribute to the L-glutamate site. N-linked (GlcNAc...) asparagine glycosylation is present at Asn-542. Residues 556-576 (ADVWVMMFVMLLIVSAVAVFV) traverse the membrane as a helical segment. Over 577-601 (FEYFSPVGYNRCLADGREPGGPSFT) the chain is Cytoplasmic. Positions 602–613 (IGKAIWLLWGLV) form an intramembrane region, discontinuously helical. The tract at residues 604–623 (KAIWLLWGLVFNNSVPVQNP) is pore-forming. Residues 614–627 (FNNSVPVQNPKGTT) are Cytoplasmic-facing. Residues 628-647 (SKIMVSVWAFFAVIFLASYT) form a helical membrane-spanning segment. Residues 648–819 (ANLAAFMIQE…SSQLDIDNMA (172 aa)) lie on the Extracellular side of the membrane. Asn-688 is a glycosylation site (N-linked (GlcNAc...) asparagine). L-glutamate contacts are provided by residues 690 to 691 (ST) and Asp-732. Residues 820 to 835 (GVFYMLGAAMALSLIT) form a helical membrane-spanning segment. The Cytoplasmic segment spans residues 836–1484 (FICEHLFYWQ…EKLSSIESDV (649 aa)). 4 positions are modified to phosphoserine: Ser-882, Ser-886, Ser-917, and Ser-920. Residues Tyr-962 and Tyr-1039 each carry the phosphotyrosine modification. Phosphoserine is present on residues Ser-1058, Ser-1061, and Ser-1064. Residues 1074–1097 (EGNAAKRRKQQYKDSLKKRPASAK) are disordered. Tyr-1109 and Tyr-1133 each carry phosphotyrosine. A Phosphoserine modification is found at Ser-1143. Tyr-1155 is subject to Phosphotyrosine. The interval 1161-1194 (DFKRDSVSGGGPCTNRSHIKHGTGDKHGVVSGVP) is disordered. Residues Ser-1255 and Ser-1259 each carry the phosphoserine modification. Residues 1271-1301 (AVTSNASTTKYPQSPTNSKAQKKNRNKLRRQ) form a disordered region. Over residues 1272–1289 (VTSNASTTKYPQSPTNSK) the composition is skewed to polar residues. Basic residues predominate over residues 1290–1301 (AQKKNRNKLRRQ). The interaction with DAPK1 stretch occupies residues 1292–1304 (KKNRNKLRRQHSY). Residue Ser-1303 is modified to Phosphoserine; by DAPK1. Phosphotyrosine is present on Tyr-1474. A PDZ-binding motif is present at residues 1482–1484 (SDV).

It belongs to the glutamate-gated ion channel (TC 1.A.10.1) family. NR2B/GRIN2B subfamily. Heterotetramer. Forms heterotetrameric channels composed of two GluN1/zeta subunits (GRIN1), and two identical GluN2/epsilon subunits (GRIN2A, GRIN2B, GRIN2C or GRIN2D) or GluN3 subunits (GRIN3A or GRIN3B) (in vitro). Can also form heterotetrameric channels that contain at least two GluN1 subunits and at least two different GluN2 subunits (or a combination of one GluN2 and one GluN3 subunits) (in vitro). In vivo, the subunit composition may depend on the expression levels of the different subunits. Found in a complex with GRIN1 and GRIN3B. Found in a complex with GRIN1, GRIN3A and PPP2CB. Interacts with PDZ domains of PATJ, DLG3 and DLG4. Interacts with HIP1 and NETO1. Interacts with MAGI3. Interacts with DAPK1. Found in a complex with GRIN1 and PRR7. Interacts with PRR7. Interacts with CAMK2A. Interacts with ARC; preventing ARC oligomerization. Interacts with TMEM25. Interacts (via the extreme C-terminus) with FRMPD2 (via the second PDZ domain); the interaction is direct and is likely to promote NMDAR-mediated neural signal transmission. Interacts with FAM81A; the interaction facilitates condensate formation via liquid-liquid phase separation. In terms of processing, phosphorylated on tyrosine residues. Phosphorylation at Ser-1303 by DAPK1 enhances synaptic NMDA receptor channel activity. Primarily found in the fronto-parieto-temporal cortex and hippocampus pyramidal cells, lower expression in the basal ganglia.

The protein localises to the cell membrane. Its subcellular location is the postsynaptic cell membrane. It is found in the cell projection. The protein resides in the dendrite. It localises to the late endosome. The protein localises to the lysosome. Its subcellular location is the cytoplasm. It is found in the cytoskeleton. It carries out the reaction Ca(2+)(in) = Ca(2+)(out). It catalyses the reaction Na(+)(in) = Na(+)(out). The enzyme catalyses K(+)(in) = K(+)(out). Its function is as follows. Component of N-methyl-D-aspartate (NMDA) receptors (NMDARs) that function as heterotetrameric, ligand-gated cation channels with high calcium permeability and voltage-dependent block by Mg(2+). Participates in synaptic plasticity for learning and memory formation by contributing to the long-term depression (LTD) of hippocampus membrane currents. Channel activation requires binding of the neurotransmitter L-glutamate to the GluN2 subunit, glycine or D-serine binding to the GluN1 subunit, plus membrane depolarization to eliminate channel inhibition by Mg(2+). NMDARs mediate simultaneously the potasium efflux and the influx of calcium and sodium. Each GluN2 subunit confers differential attributes to channel properties, including activation, deactivation and desensitization kinetics, pH sensitivity, Ca2(+) permeability, and binding to allosteric modulators. In concert with DAPK1 at extrasynaptic sites, acts as a central mediator for stroke damage. Its phosphorylation at Ser-1303 by DAPK1 enhances synaptic NMDA receptor channel activity inducing injurious Ca2+ influx through them, resulting in an irreversible neuronal death. In Homo sapiens (Human), this protein is Glutamate receptor ionotropic, NMDA 2B.